Reading from the N-terminus, the 677-residue chain is DNA ligase (677 aa).

NAD(+) contacts are provided by residues 32 to 36 (DAQYD), 81 to 82 (SL), and Glu112. Lys114 (N6-AMP-lysine intermediate) is an active-site residue. NAD(+) is bound by residues Arg135, Glu171, Lys288, and Lys312. Zn(2+) is bound by residues Cys416, Cys419, Cys434, and Cys439. The BRCT domain maps to 598 to 677 (NKNMPFSGME…REFINMLEQS (80 aa)).

It belongs to the NAD-dependent DNA ligase family. LigA subfamily. It depends on Mg(2+) as a cofactor. Mn(2+) serves as cofactor.

It carries out the reaction NAD(+) + (deoxyribonucleotide)n-3'-hydroxyl + 5'-phospho-(deoxyribonucleotide)m = (deoxyribonucleotide)n+m + AMP + beta-nicotinamide D-nucleotide.. Its function is as follows. DNA ligase that catalyzes the formation of phosphodiester linkages between 5'-phosphoryl and 3'-hydroxyl groups in double-stranded DNA using NAD as a coenzyme and as the energy source for the reaction. It is essential for DNA replication and repair of damaged DNA. In Dehalococcoides mccartyi (strain CBDB1), this protein is DNA ligase.